The sequence spans 184 residues: UPF0179 protein Pcal_2106 (184 aa).

The segment covering 146–161 has biased composition (low complexity); sequence GASSAGISQAPSRVPL. The segment at 146-184 is disordered; the sequence is GASSAGISQAPSRVPLSKPPSKSPSPQKSSPRGPTSRLP.

This sequence belongs to the UPF0179 family.

The protein is UPF0179 protein Pcal_2106 of Pyrobaculum calidifontis (strain DSM 21063 / JCM 11548 / VA1).